Reading from the N-terminus, the 269-residue chain is Hemin import ATP-binding protein HmuV (269 aa).

In terms of domain architecture, ABC transporter spans 5 to 242 (LDAEAASFAI…SLIRRVFDIA (238 aa)). 37-44 (GPNGAGKS) contacts ATP.

This sequence belongs to the ABC transporter superfamily. Heme (hemin) importer (TC 3.A.1.14.5) family. As to quaternary structure, the complex is composed of two ATP-binding proteins (HmuV), two transmembrane proteins (HmuU) and a solute-binding protein (HmuT).

Its subcellular location is the cell inner membrane. Functionally, part of the ABC transporter complex HmuTUV involved in hemin import. Responsible for energy coupling to the transport system. This chain is Hemin import ATP-binding protein HmuV, found in Rhodopseudomonas palustris (strain BisB18).